Reading from the N-terminus, the 192-residue chain is Charged multivesicular body protein 1 (192 aa).

Coiled coils occupy residues 7–35 and 102–125; these read QLKFTSKQLEKQSKKSEQSEKAQKIKLKK and NMDLEKITQVMDQFERQFEDLDVQ. The interval 164 to 192 is disordered; sequence QMGSAPSEKVQQGETDELTERLNRLKQKN.

Belongs to the SNF7 family. Probable peripherally associated component of the endosomal sorting required for transport complex III (ESCRT-III).

Its subcellular location is the endosome membrane. Functionally, probable peripherally associated component of the endosomal sorting required for transport complex III (ESCRT-III) which is involved in multivesicular bodies (MVBs) formation and sorting of endosomal cargo proteins into MVBs. MVBs contain intraluminal vesicles (ILVs) that are generated by invagination and scission from the limiting membrane of the endosome and are delivered to lysosomes enabling degradation of membrane proteins. This chain is Charged multivesicular body protein 1 (chmp1), found in Dictyostelium discoideum (Social amoeba).